A 336-amino-acid polypeptide reads, in one-letter code: Holliday junction branch migration complex subunit RuvB (336 aa).

The interval 1 to 182 (MKERIVNLET…FGMSFRMQFY (182 aa)) is large ATPase domain (RuvB-L). ATP-binding positions include L21, R22, G63, K66, T67, S68, 129 to 131 (EDF), R172, Y182, and R219. A Mg(2+)-binding site is contributed by T67. The tract at residues 183–253 (SPSELALIIK…ITLHALNELG (71 aa)) is small ATPAse domain (RuvB-S). The segment at 256 to 336 (ELGFDEADLA…IPTLKSQTLF (81 aa)) is head domain (RuvB-H). DNA contacts are provided by R310 and R315.

Belongs to the RuvB family. In terms of assembly, homohexamer. Forms an RuvA(8)-RuvB(12)-Holliday junction (HJ) complex. HJ DNA is sandwiched between 2 RuvA tetramers; dsDNA enters through RuvA and exits via RuvB. An RuvB hexamer assembles on each DNA strand where it exits the tetramer. Each RuvB hexamer is contacted by two RuvA subunits (via domain III) on 2 adjacent RuvB subunits; this complex drives branch migration. In the full resolvosome a probable DNA-RuvA(4)-RuvB(12)-RuvC(2) complex forms which resolves the HJ.

The protein resides in the cytoplasm. It carries out the reaction ATP + H2O = ADP + phosphate + H(+). Functionally, the RuvA-RuvB-RuvC complex processes Holliday junction (HJ) DNA during genetic recombination and DNA repair, while the RuvA-RuvB complex plays an important role in the rescue of blocked DNA replication forks via replication fork reversal (RFR). RuvA specifically binds to HJ cruciform DNA, conferring on it an open structure. The RuvB hexamer acts as an ATP-dependent pump, pulling dsDNA into and through the RuvAB complex. RuvB forms 2 homohexamers on either side of HJ DNA bound by 1 or 2 RuvA tetramers; 4 subunits per hexamer contact DNA at a time. Coordinated motions by a converter formed by DNA-disengaged RuvB subunits stimulates ATP hydrolysis and nucleotide exchange. Immobilization of the converter enables RuvB to convert the ATP-contained energy into a lever motion, pulling 2 nucleotides of DNA out of the RuvA tetramer per ATP hydrolyzed, thus driving DNA branch migration. The RuvB motors rotate together with the DNA substrate, which together with the progressing nucleotide cycle form the mechanistic basis for DNA recombination by continuous HJ branch migration. Branch migration allows RuvC to scan DNA until it finds its consensus sequence, where it cleaves and resolves cruciform DNA. The chain is Holliday junction branch migration complex subunit RuvB from Helicobacter pylori (strain G27).